We begin with the raw amino-acid sequence, 107 residues long: Toxin MT2730 (107 aa).

Residues 1 to 42 (MTHKRTKRQPAIAAGLNAPRRNRVGRQHGWPADVPSAEQRRA) form a disordered region.

In terms of biological role, toxic component of a type II toxin-antitoxin (TA) system. Its toxic effect is neutralized by coexpression with cognate antitoxin MT2731. The chain is Toxin MT2730 from Mycobacterium tuberculosis (strain CDC 1551 / Oshkosh).